The primary structure comprises 380 residues: Cytochrome b (380 aa).

4 helical membrane passes run 34–54 (FGSL…LLAT), 78–99 (WLIR…YLHI), 114–134 (WNTG…GYVL), and 179–199 (FFAL…IHLT). Heme b contacts are provided by His-84 and His-98. His-183 and His-197 together coordinate heme b. A ubiquinone is bound at residue His-202. The next 4 helical transmembrane spans lie at 227–247 (LKDI…ALFS), 289–309 (LGGV…PLLH), 321–341 (FSQF…WVGS), and 348–368 (FIII…LLFP).

It belongs to the cytochrome b family. As to quaternary structure, the cytochrome bc1 complex contains 11 subunits: 3 respiratory subunits (MT-CYB, CYC1 and UQCRFS1), 2 core proteins (UQCRC1 and UQCRC2) and 6 low-molecular weight proteins (UQCRH/QCR6, UQCRB/QCR7, UQCRQ/QCR8, UQCR10/QCR9, UQCR11/QCR10 and a cleavage product of UQCRFS1). This cytochrome bc1 complex then forms a dimer. The cofactor is heme b.

Its subcellular location is the mitochondrion inner membrane. Its function is as follows. Component of the ubiquinol-cytochrome c reductase complex (complex III or cytochrome b-c1 complex) that is part of the mitochondrial respiratory chain. The b-c1 complex mediates electron transfer from ubiquinol to cytochrome c. Contributes to the generation of a proton gradient across the mitochondrial membrane that is then used for ATP synthesis. This Alca torda (Razorbill) protein is Cytochrome b (MT-CYB).